We begin with the raw amino-acid sequence, 453 residues long: MSPQTETKAGVGFKAGVKEYKLTYYTPEYETKDTDILAAFRVTPQPGVPPEERGDAVAAESSTGTWTTVWTDGLTSLDRYKGRCYHIEPVPGEEDQFIAYVAYPLDLFEEGSVTNMFTSIVGNVFGFKALRALRLEDLRIPVAYVKTFQGPPHGIQVERDKLNKYGRPLLGCTIKPKLGLSAKNYGRAVYECLRGGLDFTKDDENVNSQPFMRWRDRFLFCAEAIYKSQAETGEIKGHYLNATAGTCEEMIKRAVFARELGVPIVMHDYLTGGFTANTSLSHYCRDNGLLLHIHRAMHAVIDRQKNHGMHFRVLAKALRMSGGDHIHSGTVVGKLEGERDITLGFVDLLRDDYIEQDRSRGIYFTQDWVSLPGVLPVASRGIHVWHMPALTEIFGDDSVLQFGGGTLGHPWGNAPGAVANRVALEACVKARNEGRDLAAEGGEIIREACKWSP.

Residues 1 to 2 (MS) constitute a propeptide that is removed on maturation. The residue at position 3 (Pro-3) is an N-acetylproline. Lys-14 carries the N6,N6,N6-trimethyllysine modification. The substrate site is built by Asn-123 and Thr-173. The active-site Proton acceptor is the Lys-175. Lys-177 serves as a coordination point for substrate. The Mg(2+) site is built by Lys-201, Asp-203, and Glu-204. Residue Lys-201 is modified to N6-carboxylysine. His-294 serves as the catalytic Proton acceptor. Substrate contacts are provided by Arg-295, His-327, and Ser-379.

It belongs to the RuBisCO large chain family. Type I subfamily. In terms of assembly, heterohexadecamer of 8 large chains and 8 small chains; disulfide-linked. The disulfide link is formed within the large subunit homodimers. Mg(2+) serves as cofactor. The disulfide bond which can form in the large chain dimeric partners within the hexadecamer appears to be associated with oxidative stress and protein turnover.

Its subcellular location is the plastid. It is found in the chloroplast. It catalyses the reaction 2 (2R)-3-phosphoglycerate + 2 H(+) = D-ribulose 1,5-bisphosphate + CO2 + H2O. The enzyme catalyses D-ribulose 1,5-bisphosphate + O2 = 2-phosphoglycolate + (2R)-3-phosphoglycerate + 2 H(+). RuBisCO catalyzes two reactions: the carboxylation of D-ribulose 1,5-bisphosphate, the primary event in carbon dioxide fixation, as well as the oxidative fragmentation of the pentose substrate in the photorespiration process. Both reactions occur simultaneously and in competition at the same active site. This Crucianella angustifolia (Narrow-leaved crosswort) protein is Ribulose bisphosphate carboxylase large chain.